We begin with the raw amino-acid sequence, 290 residues long: MERYDELKKGESGALVSIAAYLVLSAIKLIIGYLFHSEALTADGLNNTTDIIASVAVLIGLRISQKPPDEDHPYGHFRAETIASLIASFIMMVVGLQVLFSAGESIFSAKQETPDMIAAWTAAGGAVLMLIVYRYNKRLAKKVKSQALLAAAADNKSDAFVSIGTFIGIVAAQFHLAWIDTVTAFVIGLLICKTAWDIFKESSHSLTDGFDIKDISAYKQTIEKISGVSRLKDIKARYLGSTVHVDVVVEVSADLNITESHDIANEIERRMKEEHAIDYSHVHMEPLEQK.

6 helical membrane passes run leucine 15 to phenylalanine 35, alanine 39 to leucine 61, isoleucine 82 to alanine 102, threonine 113 to tyrosine 133, alanine 159 to isoleucine 179, and threonine 181 to glutamate 201.

It belongs to the cation diffusion facilitator (CDF) transporter (TC 2.A.4) family.

It is found in the cell membrane. In terms of biological role, secondary manganese efflux system. May prevent manganese intoxication. In Bacillus subtilis (strain 168), this protein is Manganese efflux system protein MneS.